The primary structure comprises 334 residues: Tryptophan--tRNA ligase (334 aa).

ATP is bound by residues 11-13 (QPS) and 19-20 (GN). Positions 12-20 (PSGELTIGN) match the 'HIGH' region motif. An L-tryptophan-binding site is contributed by D135. Residues 147-149 (GED), V186, and 195-199 (KMSKS) each bind ATP. A 'KMSKS' region motif is present at residues 195 to 199 (KMSKS).

This sequence belongs to the class-I aminoacyl-tRNA synthetase family. Homodimer.

The protein localises to the cytoplasm. The catalysed reaction is tRNA(Trp) + L-tryptophan + ATP = L-tryptophyl-tRNA(Trp) + AMP + diphosphate + H(+). Catalyzes the attachment of tryptophan to tRNA(Trp). In Klebsiella aerogenes (Enterobacter aerogenes), this protein is Tryptophan--tRNA ligase.